A 364-amino-acid chain; its full sequence is tRNA 2-selenouridine synthase (364 aa).

The Rhodanese domain maps to 14 to 137; sequence LIADTPIIDV…LRQTAIQATI (124 aa). Cysteine 97 functions as the S-selanylcysteine intermediate in the catalytic mechanism.

Belongs to the SelU family. As to quaternary structure, monomer.

It catalyses the reaction 5-methylaminomethyl-2-thiouridine(34) in tRNA + selenophosphate + (2E)-geranyl diphosphate + H2O + H(+) = 5-methylaminomethyl-2-selenouridine(34) in tRNA + (2E)-thiogeraniol + phosphate + diphosphate. It carries out the reaction 5-methylaminomethyl-2-thiouridine(34) in tRNA + (2E)-geranyl diphosphate = 5-methylaminomethyl-S-(2E)-geranyl-thiouridine(34) in tRNA + diphosphate. The enzyme catalyses 5-methylaminomethyl-S-(2E)-geranyl-thiouridine(34) in tRNA + selenophosphate + H(+) = 5-methylaminomethyl-2-(Se-phospho)selenouridine(34) in tRNA + (2E)-thiogeraniol. The catalysed reaction is 5-methylaminomethyl-2-(Se-phospho)selenouridine(34) in tRNA + H2O = 5-methylaminomethyl-2-selenouridine(34) in tRNA + phosphate. Its function is as follows. Involved in the post-transcriptional modification of the uridine at the wobble position (U34) of tRNA(Lys), tRNA(Glu) and tRNA(Gln). Catalyzes the conversion of 2-thiouridine (S2U-RNA) to 2-selenouridine (Se2U-RNA). Acts in a two-step process involving geranylation of 2-thiouridine (S2U) to S-geranyl-2-thiouridine (geS2U) and subsequent selenation of the latter derivative to 2-selenouridine (Se2U) in the tRNA chain. This is tRNA 2-selenouridine synthase from Escherichia coli O81 (strain ED1a).